A 645-amino-acid chain; its full sequence is Translation factor GUF1, mitochondrial (645 aa).

The 185-residue stretch at 44 to 228 (ENYRNFSIVA…AIIDRIPPPT (185 aa)) folds into the tr-type G domain. GTP contacts are provided by residues 53–60 (AHVDHGKS), 120–124 (DTPGH), and 174–177 (NKID).

Belongs to the TRAFAC class translation factor GTPase superfamily. Classic translation factor GTPase family. LepA subfamily.

The protein localises to the mitochondrion inner membrane. It carries out the reaction GTP + H2O = GDP + phosphate + H(+). Promotes mitochondrial protein synthesis. May act as a fidelity factor of the translation reaction, by catalyzing a one-codon backward translocation of tRNAs on improperly translocated ribosomes. Binds to mitochondrial ribosomes in a GTP-dependent manner. In Saccharomyces cerevisiae (strain ATCC 204508 / S288c) (Baker's yeast), this protein is Translation factor GUF1, mitochondrial.